Here is a 343-residue protein sequence, read N- to C-terminus: Zinc finger protein Gfi-1b (343 aa).

Positions 1–20 are mediates repression of transcription; the sequence is MPRSFLVKSKKTHTYNQHRY. Residues 1–20 form an SNAG domain region; that stretch reads MPRSFLVKSKKTHTYNQHRY. The segment at 51–77 is disordered; it reads STDPTEKQHTPENVITEEARSDPGDPR. Basic and acidic residues predominate over residues 67-77; that stretch reads EEARSDPGDPR. 6 C2H2-type zinc fingers span residues 176–199, 205–227, 233–255, 261–283, 289–311, and 317–340; these read YHCV…RRSH, FVCN…LNVH, FECK…LLIH, YPCQ…TYIH, HKCQ…SRKH, and FSCD…ENQH.

It localises to the nucleus. Its function is as follows. Essential transcriptional regulator necessary for development and differentiation of erythroid and megakaryocytic lineages. Alters histone methylation by recruiting histone methyltransferase to target genes promoters. Plays a role in heterochromatin formation. This chain is Zinc finger protein Gfi-1b (gfi1b), found in Xenopus laevis (African clawed frog).